Here is a 158-residue protein sequence, read N- to C-terminus: Cyclic pyranopterin monophosphate synthase (158 aa).

Residues 75–77 (LCH) and 113–114 (ME) contribute to the substrate site. Aspartate 128 is a catalytic residue.

It belongs to the MoaC family. In terms of assembly, homohexamer; trimer of dimers.

The catalysed reaction is (8S)-3',8-cyclo-7,8-dihydroguanosine 5'-triphosphate = cyclic pyranopterin phosphate + diphosphate. Its pathway is cofactor biosynthesis; molybdopterin biosynthesis. In terms of biological role, catalyzes the conversion of (8S)-3',8-cyclo-7,8-dihydroguanosine 5'-triphosphate to cyclic pyranopterin monophosphate (cPMP). This Ralstonia pickettii (strain 12J) protein is Cyclic pyranopterin monophosphate synthase.